The following is a 357-amino-acid chain: Histidinol-phosphate aminotransferase (357 aa).

An N6-(pyridoxal phosphate)lysine modification is found at Lys-221.

This sequence belongs to the class-II pyridoxal-phosphate-dependent aminotransferase family. Histidinol-phosphate aminotransferase subfamily. Requires pyridoxal 5'-phosphate as cofactor.

The enzyme catalyses L-histidinol phosphate + 2-oxoglutarate = 3-(imidazol-4-yl)-2-oxopropyl phosphate + L-glutamate. The protein operates within amino-acid biosynthesis; L-histidine biosynthesis; L-histidine from 5-phospho-alpha-D-ribose 1-diphosphate: step 7/9. This is Histidinol-phosphate aminotransferase (hisC) from Sulfurisphaera tokodaii (strain DSM 16993 / JCM 10545 / NBRC 100140 / 7) (Sulfolobus tokodaii).